The primary structure comprises 329 residues: Interferon regulatory factor 1 (329 aa).

The IRF tryptophan pentad repeat DNA-binding region spans 5-113; the sequence is RMRMRPWLEM…SAVRVYRMLP (109 aa). K78 carries the post-translational modification N6-acetyllysine. Positions 93–166 are disordered; sequence EVKDQSRNKG…LPDDHSSYTT (74 aa). A compositionally biased stretch (polar residues) spans 146–166; sequence DTFSDGLSSSTLPDDHSSYTT. Residues K276 and K300 each participate in a glycyl lysine isopeptide (Lys-Gly) (interchain with G-Cter in SUMO) cross-link.

Belongs to the IRF family. In terms of assembly, monomer. Homodimer. Interacts with EP300. Interacts with MYD88. Interacts with PIAS3. Interacts with SPOP. Post-translationally, phosphorylated by CK2 and this positively regulates its activity. Ubiquitinated in a SPOP-depedent manner. Sumoylation represses the transcriptional activity and displays enhanced resistance to protein degradation. Sumoylated by UBE2I/UBC9 and SUMO1. Inactivates the tumor suppressor activity. Elevated levels in tumor cells. Major site is Lys-276. Sumoylation is enhanced by PIAS3. Desumoylated by SENP1 in tumor cells and appears to compete with ubiquitination on C-terminal sites. In terms of processing, ubiquitinated. Appears to compete with sumoylation on C-terminal sites.

Its subcellular location is the nucleus. It localises to the cytoplasm. With respect to regulation, activated by MYD88. In terms of biological role, transcriptional regulator which displays a remarkable functional diversity in the regulation of cellular responses. Regulates transcription of IFN and IFN-inducible genes, host response to viral and bacterial infections, regulation of many genes expressed during hematopoiesis, inflammation, immune responses and cell proliferation and differentiation, regulation of the cell cycle and induction of growth arrest and programmed cell death following DNA damage. Stimulates both innate and acquired immune responses through the activation of specific target genes and can act as a transcriptional activator and repressor regulating target genes by binding to an interferon-stimulated response element (ISRE) in their promoters. Has an essentail role in IFNG-dependent immunity to mycobacteria. Binds to a consensus sequence in gene promoters. Its target genes for transcriptional activation activity are: genes involved in anti-viral response, such as IFN-alpha/beta, RIGI, TNFSF10/TRAIL, ZBP1, OAS1/2, PIAS1/GBP, EIF2AK2/PKR and RSAD2/viperin; antibacterial response, such as GBP2, GBP5, IRGB10 and NOS2/INOS; anti-proliferative response, such as p53/TP53, LOX and CDKN1A; apoptosis, such as BBC3/PUMA, CASP1, CASP7 and CASP8; immune response, such as IL7, IL12A/B and IL15, PTGS2/COX2 and CYBB; DNA damage responses and DNA repair, such as POLQ/POLH; MHC class I expression, such as TAP1, PSMB9/LMP2, PSME1/PA28A, PSME2/PA28B and B2M and MHC class II expression, such as CIITA; metabolic enzymes, such as ACOD1/IRG1. Represses genes involved in anti-proliferative response, such as BIRC5/survivin, CCNB1, CCNE1, CDK1, CDK2 and CDK4 and in immune response, such as FOXP3, IL4, ANXA2 and TLR4. Stimulates p53/TP53-dependent transcription through enhanced recruitment of EP300 leading to increased acetylation of p53/TP53. Plays an important role in immune response directly affecting NK maturation and activity, macrophage production of IL12, Th1 development and maturation of CD8+ T-cells. Also implicated in the differentiation and maturation of dendritic cells and in the suppression of regulatory T (Treg) cells development. Acts as a tumor suppressor and plays a role not only in antagonism of tumor cell growth but also in stimulating an immune response against tumor cells. The chain is Interferon regulatory factor 1 (Irf1) from Mus musculus (Mouse).